A 558-amino-acid polypeptide reads, in one-letter code: Rhamnogalacturonase B (558 aa).

Residues M1–A21 form the signal peptide. The cysteines at positions 42 and 68 are disulfide-linked. Residue N145 is glycosylated (N-linked (GlcNAc...) asparagine). D219 (proton donor) is an active-site residue. C221 and C238 form a disulfide bridge. N-linked (GlcNAc...) asparagine glycans are attached at residues N239 and N254. H294 is an active-site residue. N-linked (GlcNAc...) asparagine glycosylation occurs at N321. Disulfide bonds link C344/C350 and C372/C381. A compositionally biased stretch (low complexity) spans V503–P526. A disordered region spans residues V503–V558.

It belongs to the glycosyl hydrolase 28 family.

The protein resides in the secreted. The enzyme catalyses Endohydrolysis of alpha-D-GalA-(1-&gt;2)-alpha-L-Rha glycosidic bond in the rhamnogalacturonan I backbone with initial inversion of anomeric configuration releasing oligosaccharides with beta-D-GalA at the reducing end.. Pectinolytic enzymes consist of four classes of enzymes: pectine lyase, polygalacturonase, pectin methylesterase and rhamnogalacturonase. Hydrolyzes alpha-D-galacturonopyranosyl-(1,2)-alpha-L-rhamnopyranosyl linkages in the backbone of the hairy regions of pectins. This is Rhamnogalacturonase B (rhgB) from Aspergillus niger.